A 174-amino-acid polypeptide reads, in one-letter code: NAD(P)H-quinone oxidoreductase subunit J (174 aa).

Belongs to the complex I 30 kDa subunit family. As to quaternary structure, NDH-1 can be composed of about 15 different subunits; different subcomplexes with different compositions have been identified which probably have different functions.

It is found in the cellular thylakoid membrane. The catalysed reaction is a plastoquinone + NADH + (n+1) H(+)(in) = a plastoquinol + NAD(+) + n H(+)(out). It catalyses the reaction a plastoquinone + NADPH + (n+1) H(+)(in) = a plastoquinol + NADP(+) + n H(+)(out). In terms of biological role, NDH-1 shuttles electrons from an unknown electron donor, via FMN and iron-sulfur (Fe-S) centers, to quinones in the respiratory and/or the photosynthetic chain. The immediate electron acceptor for the enzyme in this species is believed to be plastoquinone. Couples the redox reaction to proton translocation, and thus conserves the redox energy in a proton gradient. Cyanobacterial NDH-1 also plays a role in inorganic carbon-concentration. This chain is NAD(P)H-quinone oxidoreductase subunit J, found in Picosynechococcus sp. (strain ATCC 27264 / PCC 7002 / PR-6) (Agmenellum quadruplicatum).